Here is a 323-residue protein sequence, read N- to C-terminus: Mitochondrial glutamate carrier 1 (323 aa).

Solcar repeat units follow at residues 6-93 (ISLP…FRHQ), 101-214 (LTLP…LNQL), and 223-312 (SPFY…GIAE). 6 helical membrane-spanning segments follow: residues 12-32 (LING…IDLA), 62-82 (YFGM…EKAI), 107-127 (MLAG…MEML), 189-209 (GLGA…PLFA), 223-243 (SPFY…AVAV), and 292-312 (ALVI…GIAE).

This sequence belongs to the mitochondrial carrier (TC 2.A.29) family.

The protein localises to the mitochondrion inner membrane. It carries out the reaction L-glutamate(in) + H(+)(in) = L-glutamate(out) + H(+)(out). Functionally, mitochondrial glutamate/H(+) symporter. Responsible for the transport of glutamate from the cytosol into the mitochondrial matrix with the concomitant import of a proton. Plays a role in the control of glucose-stimulated insulin secretion. This chain is Mitochondrial glutamate carrier 1 (Slc25a22), found in Mus musculus (Mouse).